The sequence spans 237 residues: KH homology domain-containing protein 1 (237 aa).

2 helical membrane passes run 7 to 29 and 33 to 50; these read RLFR…FIYG and LQTL…HLWI. The KH; atypical domain maps to 96–155; that stretch reads PMVFHMEEDQEELIFGHGDTYLRCIEVHSHTLIQLESWFTATGQTRVTVVGPHRARQWLL.

The protein belongs to the KHDC1 family.

The protein localises to the membrane. The chain is KH homology domain-containing protein 1 from Homo sapiens (Human).